Here is a 412-residue protein sequence, read N- to C-terminus: Putative disintegrin and metalloproteinase domain-containing protein 5 (412 aa).

The Disintegrin domain maps to Glu111 to Asp199. The EGF-like domain maps to Asn351 to Gln385.

Interacts with TEX101. Highly expressed in testis.

This is a non catalytic metalloprotease-like protein. The polypeptide is Putative disintegrin and metalloproteinase domain-containing protein 5 (ADAM5) (Homo sapiens (Human)).